The chain runs to 198 residues: Probable nicotinate-nucleotide adenylyltransferase (198 aa).

The protein belongs to the NadD family.

The enzyme catalyses nicotinate beta-D-ribonucleotide + ATP + H(+) = deamido-NAD(+) + diphosphate. Its pathway is cofactor biosynthesis; NAD(+) biosynthesis; deamido-NAD(+) from nicotinate D-ribonucleotide: step 1/1. Functionally, catalyzes the reversible adenylation of nicotinate mononucleotide (NaMN) to nicotinic acid adenine dinucleotide (NaAD). This Albidiferax ferrireducens (strain ATCC BAA-621 / DSM 15236 / T118) (Rhodoferax ferrireducens) protein is Probable nicotinate-nucleotide adenylyltransferase.